The chain runs to 847 residues: Alanine--tRNA ligase (847 aa).

Residues His-554, His-558, Cys-656, and His-660 each contribute to the Zn(2+) site.

Belongs to the class-II aminoacyl-tRNA synthetase family. The cofactor is Zn(2+).

It localises to the cytoplasm. The enzyme catalyses tRNA(Ala) + L-alanine + ATP = L-alanyl-tRNA(Ala) + AMP + diphosphate. Catalyzes the attachment of alanine to tRNA(Ala) in a two-step reaction: alanine is first activated by ATP to form Ala-AMP and then transferred to the acceptor end of tRNA(Ala). Also edits incorrectly charged Ser-tRNA(Ala) and Gly-tRNA(Ala) via its editing domain. The polypeptide is Alanine--tRNA ligase (Helicobacter pylori (strain ATCC 700392 / 26695) (Campylobacter pylori)).